Reading from the N-terminus, the 92-residue chain is Acylphosphatase (92 aa).

One can recognise an Acylphosphatase-like domain in the interval 5–92; that stretch reads CIAAYVYGVV…TPFETFKIRY (88 aa). Catalysis depends on residues Arg-20 and Asn-38.

This sequence belongs to the acylphosphatase family.

It catalyses the reaction an acyl phosphate + H2O = a carboxylate + phosphate + H(+). The polypeptide is Acylphosphatase (acyP) (Yersinia enterocolitica serotype O:8 / biotype 1B (strain NCTC 13174 / 8081)).